The following is a 266-amino-acid chain: MSFIDSMKLDFVGHLFGIRNRGLATACCAVAVASAIAFPYIRRDYQTFLSGGPSYAPQNIKGYLIVCVLALFRQEQKGLAIYDRLPEKRRWLPDLPPRNGPRPITTSHIIQRQRNQAPDSKFALEELKATVIPRVQARHTDLTHLSLSKFEFHAEAIFLLPSVPIDDPKNVPSHDTVRRTKREIAHMHDYHDFTLHLALAAQDGKEVVAKGWGQRHPLAGPGVPGPPTEWTFIYAPRNEEELAVVEMIIEASIGYMTNDPAGTVIV.

A helical transmembrane segment spans residues 22-41 (GLATACCAVAVASAIAFPYI).

Belongs to the fungal luciferase family.

It is found in the membrane. It catalyses the reaction 3-hydroxyhispidin + O2 = (E)-caffeoylpyruvate + hnu + CO2. The enzyme catalyses 3-hydroxyhispidin + O2 = 4-[(E)-2-(3,4-dihydroxyphenyl)ethenyl]-1,7-dihydroxy-2,3,5-trioxabicyclo[2.2.2]oct-7-en-6-one. In terms of biological role, luciferase; part of the gene cluster that mediates the fungal bioluminescence cycle. Uses the fungal luciferin 3-hydroxyhispidin as a substrate to produce an endoperoxide as a high-energy intermediate with decomposition that yields oxyluciferin (also known as caffeoylpyruvate) and light emission. The fungal bioluminescence cycle begins with the hispidin synthetase that catalyzes the formation of hispidin which is further hydroxylated by the hispidin-3-hydroxylase, yielding the fungal luciferin 3-hydroxyhispidin. The luciferase then produces an endoperoxide as a high-energy intermediate with decomposition that yields oxyluciferin and light emission. Oxyluciferin can be recycled to caffeic acid by caffeoylpyruvate hydrolase. This Armillaria ostoyae (Armillaria root rot fungus) protein is Luciferase.